We begin with the raw amino-acid sequence, 76 residues long: Probable 26S proteasome complex subunit dss-1 (76 aa).

2 disordered regions span residues 1–28 and 52–76; these read MSSTTVTKKDQKTVVEKKETEEEEFEEF and DDETHESEFSKQLKEELRKGGHPIA. 2 stretches are compositionally biased toward basic and acidic residues: residues 7-20 and 57-70; these read TKKDQKTVVEKKET and ESEFSKQLKEELRK.

The protein belongs to the DSS1/SEM1 family. As to quaternary structure, part of the 26S proteasome.

The protein localises to the nucleus. The protein resides in the cytoplasm. Its function is as follows. Subunit of the 26S proteasome which plays a role in ubiquitin-dependent proteolysis. Has an essential role in oogenesis and larval growth. Required for intestinal function and default lifespan. This is Probable 26S proteasome complex subunit dss-1 from Caenorhabditis briggsae.